The chain runs to 157 residues: Endoribonuclease YbeY (157 aa).

Residues H114, H118, and H124 each coordinate Zn(2+).

The protein belongs to the endoribonuclease YbeY family. It depends on Zn(2+) as a cofactor.

The protein localises to the cytoplasm. In terms of biological role, single strand-specific metallo-endoribonuclease involved in late-stage 70S ribosome quality control and in maturation of the 3' terminus of the 16S rRNA. The polypeptide is Endoribonuclease YbeY (Caulobacter vibrioides (strain ATCC 19089 / CIP 103742 / CB 15) (Caulobacter crescentus)).